Consider the following 321-residue polypeptide: Putative ribose-phosphate pyrophosphokinase 2 (321 aa).

Residues 43–45 (DGE) and 102–103 (RQ) each bind ATP. The Mg(2+) site is built by His136 and Asp176. D-ribose 5-phosphate is bound at residue Asp225.

The protein belongs to the ribose-phosphate pyrophosphokinase family. Class I subfamily. As to quaternary structure, homohexamer. Mg(2+) serves as cofactor.

The protein localises to the cytoplasm. The catalysed reaction is D-ribose 5-phosphate + ATP = 5-phospho-alpha-D-ribose 1-diphosphate + AMP + H(+). It functions in the pathway metabolic intermediate biosynthesis; 5-phospho-alpha-D-ribose 1-diphosphate biosynthesis; 5-phospho-alpha-D-ribose 1-diphosphate from D-ribose 5-phosphate (route I): step 1/1. Involved in the biosynthesis of the central metabolite phospho-alpha-D-ribosyl-1-pyrophosphate (PRPP) via the transfer of pyrophosphoryl group from ATP to 1-hydroxyl of ribose-5-phosphate (Rib-5-P). This chain is Putative ribose-phosphate pyrophosphokinase 2, found in Lactiplantibacillus plantarum (strain ATCC BAA-793 / NCIMB 8826 / WCFS1) (Lactobacillus plantarum).